A 258-amino-acid polypeptide reads, in one-letter code: Indole-3-glycerol phosphate synthase (258 aa).

It belongs to the TrpC family.

The catalysed reaction is 1-(2-carboxyphenylamino)-1-deoxy-D-ribulose 5-phosphate + H(+) = (1S,2R)-1-C-(indol-3-yl)glycerol 3-phosphate + CO2 + H2O. Its pathway is amino-acid biosynthesis; L-tryptophan biosynthesis; L-tryptophan from chorismate: step 4/5. The chain is Indole-3-glycerol phosphate synthase from Geobacillus sp. (strain WCH70).